The following is a 166-amino-acid chain: MSCDEGKLFVGGLNFETTEESLEQVFSKYGQVAEVVVVKDRESKRSRGFGFVTFENPEDAKDAMMAMNGKSVDGRQIRVDQAGKSSNDRRGGYRGGSSGGRGFFRGGRGRGGGGDRGYGGSSRFENRSGGYQSSGSRDYYGRSHGSYGDRSGGSYRDSYDSYTTQE.

The RRM domain occupies 6–84 (GKLFVGGLNF…RQIRVDQAGK (79 aa)). Residues 68-166 (NGKSVDGRQI…DSYDSYTTQE (99 aa)) form a disordered region. Residues 93 to 120 (YRGGSSGGRGFFRGGRGRGGGGDRGYGG) show a composition bias toward gly residues. Residues 121–166 (SSRFENRSGGYQSSGSRDYYGRSHGSYGDRSGGSYRDSYDSYTTQE) are compositionally biased toward low complexity.

In terms of assembly, interacts with prmt1. Interacts with elavl1/elrA (via RRM3). Associates with ribosomes. In terms of processing, methylated on arginine residues within RGG motifs. Methylation by prmt1 promotes cytoplasmic accumulation.

It localises to the nucleus. It is found in the nucleoplasm. Its subcellular location is the cytoplasm. Cold-inducible mRNA binding protein. Acts cooperatively with elavl1/elrA to stabilize AU-rich element (ARE)-containing mRNAs by binding to themm and inhibiting their deadenylation. Essential for embryonic gastrulation and neural development, acting to maintain the expression of a set of adhesion molecules, and cell movement during embryogenesis. Required for pronephros development. The polypeptide is Cold-inducible RNA-binding protein (Xenopus tropicalis (Western clawed frog)).